A 520-amino-acid chain; its full sequence is F-box/LRR-repeat protein At3g59200 (520 aa).

The F-box domain maps to 6-54; sequence RDRISSLPNPVVSHILSFLPTKEAASTSVLSKKWRYLFAYVTNLDFDDS. 3 LRR repeats span residues 170-197, 219-244, and 340-365; these read CVDV…VLMN, FCEE…EYSD, and NSEI…VLKR.

The chain is F-box/LRR-repeat protein At3g59200 from Arabidopsis thaliana (Mouse-ear cress).